A 363-amino-acid polypeptide reads, in one-letter code: MKESVIRKLEGLLERNEEVMALLGDASVISDQDRFRALSKEYAQLEDVVAGFKAYQQAQADLDSAKEMLEEDDAEMREMAQEEMKAAKAKLEHLEDELQILLLPKDPDDDKNAFVEIRAGAGGDEAAIFAGDLFRMYSRYAEANRWQIEIMSCNEGEHGGFKEVIMKVSGEGVYGKLKFESGGHRVQRVPETESQGRVHTSAVTVVVLHEVPEAEAISINPADLKVDTFRSSGAGGQHVNKTDSAIRITHIPTGIVVECQDQRSQHKNRAQAMSVLAARIQAVEDEKRRSAEESTRRSLVASGDRSERVRTYNFPQGRVSEHRINLTLYRLNEVMEGDLDAILLPLMQEHQADQLAALADEQG.

At Gln237 the chain carries N5-methylglutamine. Over residues 284-296 (EDEKRRSAEESTR) the composition is skewed to basic and acidic residues. The tract at residues 284 to 305 (EDEKRRSAEESTRRSLVASGDR) is disordered.

It belongs to the prokaryotic/mitochondrial release factor family. Post-translationally, methylated by PrmC. Methylation increases the termination efficiency of RF1.

It localises to the cytoplasm. Its function is as follows. Peptide chain release factor 1 directs the termination of translation in response to the peptide chain termination codons UAG and UAA. This chain is Peptide chain release factor 1, found in Shewanella baltica (strain OS185).